A 286-amino-acid chain; its full sequence is Thiamine-monophosphate kinase (286 aa).

The Mg(2+) site is built by D22, S36, T37, and D38. Residue D45 coordinates substrate. Residues D66 and D111 each contribute to the Mg(2+) site. ATP-binding positions include 110–111 and R136; that span reads GD. D191 provides a ligand contact to Mg(2+). S193 lines the ATP pocket. D194 lines the Mg(2+) pocket. Substrate is bound at residue Y282.

This sequence belongs to the thiamine-monophosphate kinase family.

The catalysed reaction is thiamine phosphate + ATP = thiamine diphosphate + ADP. It functions in the pathway cofactor biosynthesis; thiamine diphosphate biosynthesis; thiamine diphosphate from thiamine phosphate: step 1/1. Catalyzes the ATP-dependent phosphorylation of thiamine-monophosphate (TMP) to form thiamine-pyrophosphate (TPP), the active form of vitamin B1. This is Thiamine-monophosphate kinase from Methanospirillum hungatei JF-1 (strain ATCC 27890 / DSM 864 / NBRC 100397 / JF-1).